The sequence spans 601 residues: MSTISIHHVGILRNPLPSKNKRALINNPWSLSLPRSSSASRLVKPCRISSKPDTKPAEITRRSANYEPSLWDFDYLQSLNGHQHYKKEEQLKREEELIVQVKMLLGTKMEAVKQLELIDDLKNLGLSYFFRDEIKKILTSIYNNSFENNNKVGDLYFTALGFRLLRQHGFNVSQRIFDCFKNEKGIHFDETLIGEDIKATLQLYEASFHLREGENTLELARQISTKYLQKMVDEGRINDENLSSWIRHSLDLPLHWRIQRLEARWFLDAYAAREDKNPLIFELAKLDFNIIQATQQEELKEVSRWWNDSCLAEKLPFVRDRIVKCCFWAVGLFELLEFGYQRKITAIIIHLITAIDDVYDVYGTLDELQLLTNAIRRWDTLSIDQLPYYMQLCYMTLHNYVSDLGYDILKDRGINTIPHIHQTWVSLVEAYLKEAKWYESGYTPSLEEYLNNAGFSIGVIPIVVALELSIPNSTIHHRTRIDHRHEILHQSGLVLRLADDLGTAQHEMEKGDVPKAIQCYMKDTNASEEEAREHVRFMIGEAWKGLNTAMAKADDCPFTEQAVEAAANLGRAAQFIYLDGDGHGNFQIRQHVEKLFFHPYV.

Residues 1–35 (MSTISIHHVGILRNPLPSKNKRALINNPWSLSLPR) constitute a chloroplast transit peptide. The Mn(2+) site is built by Asp-356 and Asp-360. A DDXXD motif motif is present at residues 356–360 (DDVYD). Homodimerization stretches follow at residues 362-368 (YGTLDEL) and 434-471 (EAKW…LSIP). Mn(2+)-binding residues include Asp-499 and Glu-507.

Belongs to the terpene synthase family. As to quaternary structure, homodimer. Requires Mn(2+) as cofactor. Mg(2+) serves as cofactor. As to expression, expressed in peltate glandular trichomes. Present at low levels in flowers, leaves and stems.

The protein resides in the plastid. It is found in the chloroplast. It carries out the reaction (2E)-geranyl diphosphate = beta-phellandrene + diphosphate. The catalysed reaction is (2E)-geranyl diphosphate = (1R,5R)-sabinene + diphosphate. It participates in secondary metabolite biosynthesis; terpenoid biosynthesis. Its function is as follows. Involved in the biosynthesis of phenolic monoterpenes natural products. Monoterpene synthase that catalyzes mainly the formation of olefins such as sabinene and beta-phellandrene, and minor amounts of other monoterpenes (e.g. myrcene, gamma-terpinene, alpha-thujene and alpha-pinene) from geranyl diphosphate (GPP). This chain is Beta-phellandrene synthase, found in Origanum vulgare (Wild marjoram).